The chain runs to 798 residues: MPPKKAQTRRIVSLDSLFGHTLLNITGEPVTPTKIAIFQLIRTLFHAHFGVGAVPSLKPFDKDEKTRVFTVLYGLIIMKSEISYDDFRCIVRILNDGLGRSIYYRFVTSMEKLAHGEDQIEMLFEDAFYTAKRPNHEKVLKREDSWLDELTFMNSNSFLYIWIKRVMMQYTRTSQNGTFEIAEKFQKWIISGTLEIISHPILSGINRALPTEIDCSIRARHWCAAQLRLVQLCPTKAMSYFQILDWCDTIHRRHHDVVDVHLLRAAIFVQLKNSSDAVKSLKQFFDMSMLEITENSKHALETLKLMSPSQVALRFGPILQGRVHRIFGERQIASALFAESIQQSQVNVDDMCNRIANMEVTINSIYMSGPLLQRLSGETFAAGKKEEESVENERRVQQNSVHAAVDLNVPTLRSLQKNFREDYELHAFLVSMCKFLLCIQDMMDGKFFKHNSTADYVSVGFHRLRLLLDMNNKGFVLQAFANAIMTSGLIQSGMYHQAKRVAETMIVSNCDAPNSPILETESHAVAGVNLVYSLAAVGDYEKAQKTIDILKNRFPENINWMAARHVDICSKIVNFERNFLLNKYSECSRHLAGLETSAPLEFVLRKSLLLAATGKLAEAVLLLGTYECGDVRGSMRIHMQMATIHTAYGQFETAEIQIQEAGKVAVNAHFLDANLLVVRRVGSLMLGRFMAREAYQVLHALSAKIEHFGSFIEKAIYHVSMARCLRLMHKDPRVHLKQCKAQIIGNKWPAMEKLLLTELTILHHSGGLYPDEQKEMKAKERFGKIEADFPGPCTWMFI.

The stretch at 339-359 forms a coiled coil; it reads ESIQQSQVNVDDMCNRIANME.

It belongs to the APC5 family. As to quaternary structure, the APC/C complex is probably composed of at least 12 subunits: apc-2, apc-10, apc-11, cdc-26, emb-1, emb-27, emb-30, mat-1, mat-2, mat-3, such-1 and gfi-3. Expressed in head neurons, vulval precursor cells and in mature sperm stored in the spermatheca.

It participates in protein modification; protein ubiquitination. Functionally, probable component of the anaphase promoting complex/cyclosome (APC/C), a cell cycle-regulated E3 ubiquitin ligase that controls progression through mitosis and the G1 phase of the cell cycle. The APC/C complex acts by mediating ubiquitination and subsequent degradation of target proteins. Required for the metaphase to anaphase transition in meiosis. Plays a role in the segregation of DNA and centrioles during meiosis in male germ cells. The polypeptide is Suppressor of spindle checkpoint defect 1 (Caenorhabditis elegans).